A 144-amino-acid polypeptide reads, in one-letter code: Maximins 6/Hv (144 aa).

The signal sequence occupies residues 1–18 (MNFKYIVAVSFLIASGYA). A propeptide spanning residues 19-43 (RSEENDVQSLSQREVLEEETLREIR) is cleaved from the precursor. Position 70 is an asparagine amide (Asn70). A propeptide spanning residues 74–123 (TAKGHEVMKRLEAVMRDLDSLDHPEEASERETRGFNQEEIANLFTKKEKR) is cleaved from the precursor. Ile143 carries the isoleucine amide modification.

This sequence belongs to the bombinin family. Expressed by the skin glands.

It is found in the secreted. Its function is as follows. Shows antimicrobial activity against bacteria and against the fungus C.albicans. It has little hemolytic activity. In terms of biological role, shows antimicrobial activity against bacteria and against the fungus C.albicans. Shows strong hemolytic activity. The chain is Maximins 6/Hv from Bombina maxima (Giant fire-bellied toad).